A 318-amino-acid chain; its full sequence is Ubiquitin-like domain-containing CTD phosphatase 1 (318 aa).

Residues 3-81 enclose the Ubiquitin-like domain; the sequence is LSLIIKWGGQ…IMMMGTREES (79 aa). Positions 133 to 294 constitute an FCP1 homology domain; it reads PREGKKLLVL…LKLSQYLKEI (162 aa). Mg(2+)-binding residues include Asp-143, Asp-145, and Asp-253.

Requires Mg(2+) as cofactor.

It is found in the nucleus. It carries out the reaction O-phospho-L-seryl-[protein] + H2O = L-seryl-[protein] + phosphate. It catalyses the reaction O-phospho-L-threonyl-[protein] + H2O = L-threonyl-[protein] + phosphate. Its function is as follows. Dephosphorylates 26S nuclear proteasomes, thereby decreasing their proteolytic activity. Recruited to the 19S regulatory particle of the 26S proteasome where it dephosphorylates 19S component psmc2 which impairs psmc2 ATPase activity and disrupts 26S proteasome assembly. Has also been reported to stimulate the proteolytic activity of the 26S proteasome. This is Ubiquitin-like domain-containing CTD phosphatase 1 (ublcp1) from Xenopus tropicalis (Western clawed frog).